A 121-amino-acid chain; its full sequence is B-box domain protein 31 (121 aa).

A B box-type; atypical zinc finger spans residues 26–72; the sequence is SVPVRCELCDGDASVFCEADSAFLCRKCDRWVHGANFLAWRHVRRVL. The PFVFL signature appears at 117 to 121; sequence PFVFL.

Highly expressed in shoot apical meristems and in vascular tissues of leaves. Also detected in petioles.

Developmental regulator acting by forming heterodimeric complexes, that sequester CO and CO-like (COL) proteins into non-functional complexes. Involved in the CO-mediated long-day flowering-promotion pathway. Engages CO and the transcriptional repressor TPL in a tripartite complex. The polypeptide is B-box domain protein 31 (Arabidopsis thaliana (Mouse-ear cress)).